The chain runs to 101 residues: UPF0473 protein STER_1939 (101 aa).

This sequence belongs to the UPF0473 family.

In Streptococcus thermophilus (strain ATCC BAA-491 / LMD-9), this protein is UPF0473 protein STER_1939.